The chain runs to 225 residues: Small ribosomal subunit protein uS2 (225 aa).

The protein belongs to the universal ribosomal protein uS2 family.

The sequence is that of Small ribosomal subunit protein uS2 from Metallosphaera sedula (strain ATCC 51363 / DSM 5348 / JCM 9185 / NBRC 15509 / TH2).